A 307-amino-acid chain; its full sequence is Oxygen-dependent coproporphyrinogen-III oxidase (307 aa).

S99 contacts substrate. A divalent metal cation contacts are provided by H103 and H113. H113 acts as the Proton donor in catalysis. 115–117 (NVR) lines the substrate pocket. A divalent metal cation is bound by residues H152 and H182. The interval 247-282 (YVEFNLVFDRGTLFGLQSGGRTESILMSMPPVANWR) is important for dimerization. Residue 265 to 267 (GGR) coordinates substrate.

The protein belongs to the aerobic coproporphyrinogen-III oxidase family. In terms of assembly, homodimer. A divalent metal cation is required as a cofactor.

The protein localises to the cytoplasm. The catalysed reaction is coproporphyrinogen III + O2 + 2 H(+) = protoporphyrinogen IX + 2 CO2 + 2 H2O. Its pathway is porphyrin-containing compound metabolism; protoporphyrin-IX biosynthesis; protoporphyrinogen-IX from coproporphyrinogen-III (O2 route): step 1/1. Involved in the heme biosynthesis. Catalyzes the aerobic oxidative decarboxylation of propionate groups of rings A and B of coproporphyrinogen-III to yield the vinyl groups in protoporphyrinogen-IX. This is Oxygen-dependent coproporphyrinogen-III oxidase from Burkholderia orbicola (strain MC0-3).